Reading from the N-terminus, the 161-residue chain is MDDIYKAAVEQLTEEQKNEFKAAFDIFVLGAEDGCISTKELGKVMRMLGQNPTPEELQEMIDEVDEDGSGTVDFDEFLVMMVRCMKDDSKGKSEEELSDLFRMFDKNADGYIDLDELKIMLQATGETITEDDIEELMKDGDKNNDGRIDYDEFLEFMKGVE.

Met-1 bears the N-acetylmethionine mark. EF-hand domains follow at residues Gln-16–Asn-51, Pro-52–Asp-87, Lys-92–Thr-127, and Ile-128–Glu-161. Ca(2+)-binding residues include Asp-65, Asp-67, Ser-69, Thr-71, and Glu-76. At Ser-98 the chain carries Phosphoserine. The Ca(2+) site is built by Asp-105, Asn-107, Asp-109, Tyr-111, Glu-116, Asp-141, Asn-143, Asp-145, Arg-147, and Glu-152.

This sequence belongs to the troponin C family.

Functionally, troponin is the central regulatory protein of striated muscle contraction. Tn consists of three components: Tn-I which is the inhibitor of actomyosin ATPase, Tn-T which contains the binding site for tropomyosin and Tn-C. The binding of calcium to Tn-C abolishes the inhibitory action of Tn on actin filaments. The protein is Troponin C, slow skeletal and cardiac muscles (TNNC1) of Homo sapiens (Human).